The primary structure comprises 798 residues: Bromodomain-containing protein 2 (798 aa).

Residue methionine 1 is modified to N-acetylmethionine. The disordered stretch occupies residues 1 to 21 (MLQNVTPHKLPGEGNAGLLGL). Threonine 6 carries the post-translational modification Phosphothreonine. Serine 36 is subject to Phosphoserine. The disordered stretch occupies residues 53–72 (LQLAPANPPPPEVSNPKKPG). Residues 73–179 (RVTNQLQYLH…KIFLQKVASM (107 aa)) form the Bromo 1 domain. A protein-binding residues include aspartate 111, tyrosine 154, asparagine 155, lysine 156, aspartate 159, and aspartate 160. Disordered regions lie at residues 267–348 (PPAQ…LSEQ), 455–648 (EPLE…KRQL), and 735–798 (EKRL…SDSG). Low complexity predominate over residues 284–297 (TTTPTPTAILAPGS). Serine 297, serine 300, and serine 304 each carry phosphoserine. A compositionally biased stretch (basic and acidic residues) spans 315-331 (MRRESGRPIKPPRKDLP). The region spanning 343–452 (GKLSEQLKHC…DVFEFRYAKM (110 aa)) is the Bromo 2 domain. Acidic residues predominate over residues 480–512 (SSEESSSESSSEEEEEEDEEDEEEESESSDSEE). A compositionally biased stretch (basic residues) spans 542–564 (KPKRKREKKEKKKKRKAEKHRGR). A Nuclear localization signal motif is present at residues 553–557 (KKKRK). Residues 630 to 712 (DSEEEEESRP…SCLRKKPRKP (83 aa)) form the NET domain. Serine 631 is subject to Phosphoserine. Basic and acidic residues predominate over residues 637–648 (SRPMSYDEKRQL). The span at 772-792 (SASSSSSDSSSSSSSSSSSDT) shows a compositional bias: low complexity.

It belongs to the BET family. In terms of assembly, homodimer. Interacts with E2F1. Interacts with (acetylated) STAT3; promoting STAT3 recruitment to chromatin. Interacts with CTCF; promoting BRD2 recruitment to chromatin.

It localises to the nucleus. Its subcellular location is the chromosome. Its function is as follows. Chromatin reader protein that specifically recognizes and binds histone H4 acetylated at 'Lys-5' and 'Lys-12' (H4K5ac and H4K12ac, respectively), thereby controlling gene expression and remodeling chromatin structures. Recruits transcription factors and coactivators to target gene sites, and activates RNA polymerase II machinery for transcriptional elongation. Plays a key role in genome compartmentalization via its association with CTCF and cohesin: recruited to chromatin by CTCF and promotes formation of topologically associating domains (TADs) via its ability to bind acetylated histones, contributing to CTCF boundary formation and enhancer insulation. Also recognizes and binds acetylated non-histone proteins, such as STAT3. Involved in inflammatory response by regulating differentiation of naive CD4(+) T-cells into T-helper Th17: recognizes and binds STAT3 acetylated at 'Lys-87', promoting STAT3 recruitment to chromatin. In addition to acetylated lysines, also recognizes and binds lysine residues on histones that are both methylated and acetylated on the same side chain to form N6-acetyl-N6-methyllysine (Kacme), an epigenetic mark of active chromatin associated with increased transcriptional initiation. Specifically binds histone H4 acetyl-methylated at 'Lys-5' and 'Lys-12' (H4K5acme and H4K12acme, respectively). This Rattus norvegicus (Rat) protein is Bromodomain-containing protein 2 (Brd2).